Here is a 227-residue protein sequence, read N- to C-terminus: Ubiquitin domain-containing protein 1 (227 aa).

A compositionally biased stretch (basic and acidic residues) spans 1–14 (MGGCVGRERAETRG). Residues 1–45 (MGGCVGRERAETRGRGSRTQRKRGGRNEPLKKDKPKWKSDYPMTE) are disordered. The span at 15-24 (RGSRTQRKRG) shows a compositional bias: basic residues. Over residues 25-39 (GRNEPLKKDKPKWKS) the composition is skewed to basic and acidic residues. Positions 150–225 (FQLKVRLSTG…IQVIVNQPAP (76 aa)) constitute a Ubiquitin-like domain.

In terms of biological role, may be involved in the regulation of cellular senescence through a positive feedback loop with TP53. The chain is Ubiquitin domain-containing protein 1 (ubtd1) from Danio rerio (Zebrafish).